A 537-amino-acid chain; its full sequence is Chaperonin GroEL 1 (537 aa).

ATP is bound by residues 29–32, 86–90, glycine 413, 478–480, and aspartate 494; these read TLGP, DGTTT, and NAA.

The protein belongs to the chaperonin (HSP60) family. Forms a cylinder of 14 subunits composed of two heptameric rings stacked back-to-back. Interacts with the co-chaperonin GroES.

The protein localises to the cytoplasm. It carries out the reaction ATP + H2O + a folded polypeptide = ADP + phosphate + an unfolded polypeptide.. In terms of biological role, together with its co-chaperonin GroES, plays an essential role in assisting protein folding. The GroEL-GroES system forms a nano-cage that allows encapsulation of the non-native substrate proteins and provides a physical environment optimized to promote and accelerate protein folding. The sequence is that of Chaperonin GroEL 1 from Corynebacterium efficiens (strain DSM 44549 / YS-314 / AJ 12310 / JCM 11189 / NBRC 100395).